Reading from the N-terminus, the 372-residue chain is MPLIDLPDFAGDLIAEFAARRTDRVDTPIIQPAEPFLDMAGEDLRRRIFLTESETGASLCLRPEFTIPVCLQHIETATGTPKRYSYLGEIFRQRREGGQEFYQAGIEDLGDRDIASADARAVGDAIAILNRLVPGKALSVTLGDQAVFEAVVQALGLPSGWQKRLIHAFGNMMQLETLLARLASPQPVTGLDPHALDFLTRGDEQGLVMHIDSTMQATGYSTNASRSPLEIARRLREKLVLSETRLDDEAFRVLEEFLSLSVPLADASSALAGFADAAGLKLGTALERFDARVAALANAGVDAGSIDYRAAFGRPLDYYTGLVFEVTMEGSAAVLVGGGRFDRLLTLLGAKDHIPAVGFALWLDRIETARAA.

It belongs to the class-II aminoacyl-tRNA synthetase family. HisZ subfamily. Heteromultimer composed of HisG and HisZ subunits.

It localises to the cytoplasm. It functions in the pathway amino-acid biosynthesis; L-histidine biosynthesis; L-histidine from 5-phospho-alpha-D-ribose 1-diphosphate: step 1/9. Functionally, required for the first step of histidine biosynthesis. May allow the feedback regulation of ATP phosphoribosyltransferase activity by histidine. The chain is ATP phosphoribosyltransferase regulatory subunit from Rhizobium rhizogenes (strain K84 / ATCC BAA-868) (Agrobacterium radiobacter).